The sequence spans 204 residues: Small ribosomal subunit protein uS4 (204 aa).

The region spanning R92–G157 is the S4 RNA-binding domain.

Belongs to the universal ribosomal protein uS4 family. As to quaternary structure, part of the 30S ribosomal subunit. Contacts protein S5. The interaction surface between S4 and S5 is involved in control of translational fidelity.

One of the primary rRNA binding proteins, it binds directly to 16S rRNA where it nucleates assembly of the body of the 30S subunit. Its function is as follows. With S5 and S12 plays an important role in translational accuracy. The sequence is that of Small ribosomal subunit protein uS4 from Streptomyces avermitilis (strain ATCC 31267 / DSM 46492 / JCM 5070 / NBRC 14893 / NCIMB 12804 / NRRL 8165 / MA-4680).